A 292-amino-acid polypeptide reads, in one-letter code: RWD domain-containing protein 2A (292 aa).

An RWD domain is found at 14–134; it reads LEMEMLFSMF…QWLQDNSASY (121 aa).

The sequence is that of RWD domain-containing protein 2A (RWDD2A) from Homo sapiens (Human).